Consider the following 281-residue polypeptide: 2,3,4,5-tetrahydropyridine-2,6-dicarboxylate N-succinyltransferase (281 aa).

Substrate is bound by residues Arg-108 and Asp-145.

It belongs to the transferase hexapeptide repeat family. Homotrimer.

It localises to the cytoplasm. It catalyses the reaction (S)-2,3,4,5-tetrahydrodipicolinate + succinyl-CoA + H2O = (S)-2-succinylamino-6-oxoheptanedioate + CoA. The protein operates within amino-acid biosynthesis; L-lysine biosynthesis via DAP pathway; LL-2,6-diaminopimelate from (S)-tetrahydrodipicolinate (succinylase route): step 1/3. The chain is 2,3,4,5-tetrahydropyridine-2,6-dicarboxylate N-succinyltransferase from Nitrobacter winogradskyi (strain ATCC 25391 / DSM 10237 / CIP 104748 / NCIMB 11846 / Nb-255).